Consider the following 181-residue polypeptide: Oligoribonuclease (181 aa).

The region spanning leucine 8–leucine 171 is the Exonuclease domain. Tyrosine 129 is an active-site residue.

Belongs to the oligoribonuclease family.

It localises to the cytoplasm. Functionally, 3'-to-5' exoribonuclease specific for small oligoribonucleotides. The sequence is that of Oligoribonuclease from Pseudoalteromonas atlantica (strain T6c / ATCC BAA-1087).